The following is a 544-amino-acid chain: Chaperonin GroEL (544 aa).

Residues 29–32 (TLGP), Lys-50, 86–90 (DGTTT), Gly-414, 477–479 (DAA), and Asp-493 contribute to the ATP site.

It belongs to the chaperonin (HSP60) family. Forms a cylinder of 14 subunits composed of two heptameric rings stacked back-to-back. Interacts with the co-chaperonin GroES.

The protein localises to the cytoplasm. It catalyses the reaction ATP + H2O + a folded polypeptide = ADP + phosphate + an unfolded polypeptide.. Functionally, together with its co-chaperonin GroES, plays an essential role in assisting protein folding. The GroEL-GroES system forms a nano-cage that allows encapsulation of the non-native substrate proteins and provides a physical environment optimized to promote and accelerate protein folding. This is Chaperonin GroEL from Hydrogenovibrio crunogenus (strain DSM 25203 / XCL-2) (Thiomicrospira crunogena).